The following is a 496-amino-acid chain: Amino-acid acetyltransferase, mitochondrial (496 aa).

The 161-residue stretch at 333 to 493 folds into the N-acetyltransferase domain; sequence YHGTDCLTNG…LDVIDSIQPT (161 aa).

Belongs to the acetyltransferase family.

The protein localises to the mitochondrion. The enzyme catalyses L-glutamate + acetyl-CoA = N-acetyl-L-glutamate + CoA + H(+). It functions in the pathway amino-acid biosynthesis; L-arginine biosynthesis; N(2)-acetyl-L-ornithine from L-glutamate: step 1/4. N-acetylglutamate synthase involved in arginine biosynthesis. In Schizosaccharomyces japonicus (strain yFS275 / FY16936) (Fission yeast), this protein is Amino-acid acetyltransferase, mitochondrial (arg2).